A 757-amino-acid polypeptide reads, in one-letter code: Transcription regulator rua1 (757 aa).

Disordered stretches follow at residues 122–169 (SSGS…LPVS), 181–218 (NHQVTTQDASVQPKLEKQCQPPSHNVNQQNAFASSNQD), 237–295 (RNTG…NGYT), 372–393 (SADCGLLPRPPSNSPEPHPYPL), and 422–582 (MELQ…IGNA). Residues 125–165 (SATKSEPSTCSSSTDFSMSSTADASTAPQHSSSGDSSMSSG) are compositionally biased toward low complexity. Composition is skewed to polar residues over residues 181–190 (NHQVTTQDAS) and 200–218 (QPPSHNVNQQNAFASSNQD). A compositionally biased stretch (basic residues) spans 240–249 (GHRQHNRHQK). Positions 253 to 277 (LPQGQSCTNSGSSSRQVTRPNSPNH) are enriched in polar residues. A compositionally biased stretch (pro residues) spans 379–393 (PRPPSNSPEPHPYPL). A compositionally biased stretch (polar residues) spans 428–437 (PARSNSTFGR). Positions 439-453 (SQRHHQPPPSHRQRS) are enriched in basic residues. 3 stretches are compositionally biased toward low complexity: residues 454–465 (RTSASSISNTNA), 494–510 (ASQSPSSPSESTAATDA), and 543–582 (TSSSVSALTSTTTTTVSTGASSVASSISGPSSASSGIGNA). The segment at 661–692 (REGWCSLCPQGEWYSMKRSQYLYHMQFDHGIS) adopts a C2H2-type 1 degenerate zinc-finger fold. The segment at 717–750 (GLCHHCNKWIPICFGPQRKRDFKAWFKHARKCHR) adopts a C2H2-type 2; degenerate zinc-finger fold.

Its subcellular location is the nucleus. Functionally, transcription factor; part of the gene cluster that mediates the biosynthesis of the glycolipid biosurfactant ustilagic acid (UA). UA is a secreted cellobiose glycolipid that is toxic for many microorganisms and confers biocontrol activity to U.maydis. Recognizes and binds to the specific 5'-T/G-G/T-C-G-C-A-T-A/T-C/T-C/T-G/A-3' upstream activating sequence found in all promoters of the UA biosynthesis genes. The sequence is that of Transcription regulator rua1 from Mycosarcoma maydis (Corn smut fungus).